The following is a 1068-amino-acid chain: Carbamoyl phosphate synthase large chain (1068 aa).

The tract at residues 1–403 (MPKRTDINTI…SLQKALRGLE (403 aa)) is carboxyphosphate synthetic domain. ATP-binding residues include Arg-129, Arg-169, Gly-175, Gly-176, Gln-208, Val-210, Glu-215, Gly-241, Val-242, His-243, Gln-285, and Glu-299. The 196-residue stretch at 133 to 328 (KEAMEKIGLS…IAKVAAKLAV (196 aa)) folds into the ATP-grasp 1 domain. Gln-285, Glu-299, and Asn-301 together coordinate Mg(2+). Mn(2+) contacts are provided by Gln-285, Glu-299, and Asn-301. The tract at residues 404–548 (TGICGFNLMS…YSTYEEECES (145 aa)) is oligomerization domain. The carbamoyl phosphate synthetic domain stretch occupies residues 549 to 930 (RPSDKKKIMI…AFLKAQLGAN (382 aa)). In terms of domain architecture, ATP-grasp 2 spans 673 to 864 (QQILHKLHLK…LAKIAARVMA (192 aa)). The ATP site is built by Arg-709, His-748, Leu-750, Glu-755, Gly-780, Ile-781, His-782, Ser-783, Gln-823, and Glu-835. The Mg(2+) site is built by Gln-823, Glu-835, and Asn-837. Positions 823, 835, and 837 each coordinate Mn(2+). Residues 931–1068 (ERIPKTGKVF…SLQDLHQRLL (138 aa)) enclose the MGS-like domain. Positions 931–1068 (ERIPKTGKVF…SLQDLHQRLL (138 aa)) are allosteric domain.

It belongs to the CarB family. Composed of two chains; the small (or glutamine) chain promotes the hydrolysis of glutamine to ammonia, which is used by the large (or ammonia) chain to synthesize carbamoyl phosphate. Tetramer of heterodimers (alpha,beta)4. Mg(2+) serves as cofactor. Requires Mn(2+) as cofactor.

The enzyme catalyses hydrogencarbonate + L-glutamine + 2 ATP + H2O = carbamoyl phosphate + L-glutamate + 2 ADP + phosphate + 2 H(+). It carries out the reaction hydrogencarbonate + NH4(+) + 2 ATP = carbamoyl phosphate + 2 ADP + phosphate + 2 H(+). It functions in the pathway amino-acid biosynthesis; L-arginine biosynthesis; carbamoyl phosphate from bicarbonate: step 1/1. Its pathway is pyrimidine metabolism; UMP biosynthesis via de novo pathway; (S)-dihydroorotate from bicarbonate: step 1/3. Large subunit of the glutamine-dependent carbamoyl phosphate synthetase (CPSase). CPSase catalyzes the formation of carbamoyl phosphate from the ammonia moiety of glutamine, carbonate, and phosphate donated by ATP, constituting the first step of 2 biosynthetic pathways, one leading to arginine and/or urea and the other to pyrimidine nucleotides. The large subunit (synthetase) binds the substrates ammonia (free or transferred from glutamine from the small subunit), hydrogencarbonate and ATP and carries out an ATP-coupled ligase reaction, activating hydrogencarbonate by forming carboxy phosphate which reacts with ammonia to form carbamoyl phosphate. The protein is Carbamoyl phosphate synthase large chain of Pasteurella multocida (strain Pm70).